The sequence spans 268 residues: Methionine aminopeptidase (268 aa).

Position 79 (H79) interacts with substrate. Residues D97, D108, and H172 each contribute to the a divalent metal cation site. H179 serves as a coordination point for substrate. The a divalent metal cation site is built by E205 and E236.

The protein belongs to the peptidase M24A family. Methionine aminopeptidase type 1 subfamily. As to quaternary structure, monomer. Co(2+) is required as a cofactor. Zn(2+) serves as cofactor. The cofactor is Mn(2+). It depends on Fe(2+) as a cofactor.

The catalysed reaction is Release of N-terminal amino acids, preferentially methionine, from peptides and arylamides.. Removes the N-terminal methionine from nascent proteins. The N-terminal methionine is often cleaved when the second residue in the primary sequence is small and uncharged (Met-Ala-, Cys, Gly, Pro, Ser, Thr, or Val). Requires deformylation of the N(alpha)-formylated initiator methionine before it can be hydrolyzed. This is Methionine aminopeptidase from Haemophilus influenzae (strain ATCC 51907 / DSM 11121 / KW20 / Rd).